The chain runs to 207 residues: Thiamine-phosphate synthase (207 aa).

Residues 38–42 (QYRAK) and N70 each bind 4-amino-2-methyl-5-(diphosphooxymethyl)pyrimidine. Mg(2+)-binding residues include D71 and D90. T109 is a 4-amino-2-methyl-5-(diphosphooxymethyl)pyrimidine binding site. 135–137 (TNS) serves as a coordination point for 2-[(2R,5Z)-2-carboxy-4-methylthiazol-5(2H)-ylidene]ethyl phosphate. K138 serves as a coordination point for 4-amino-2-methyl-5-(diphosphooxymethyl)pyrimidine. 2-[(2R,5Z)-2-carboxy-4-methylthiazol-5(2H)-ylidene]ethyl phosphate contacts are provided by residues G165 and 185-186 (IS).

It belongs to the thiamine-phosphate synthase family. Requires Mg(2+) as cofactor.

It catalyses the reaction 2-[(2R,5Z)-2-carboxy-4-methylthiazol-5(2H)-ylidene]ethyl phosphate + 4-amino-2-methyl-5-(diphosphooxymethyl)pyrimidine + 2 H(+) = thiamine phosphate + CO2 + diphosphate. The enzyme catalyses 2-(2-carboxy-4-methylthiazol-5-yl)ethyl phosphate + 4-amino-2-methyl-5-(diphosphooxymethyl)pyrimidine + 2 H(+) = thiamine phosphate + CO2 + diphosphate. It carries out the reaction 4-methyl-5-(2-phosphooxyethyl)-thiazole + 4-amino-2-methyl-5-(diphosphooxymethyl)pyrimidine + H(+) = thiamine phosphate + diphosphate. It participates in cofactor biosynthesis; thiamine diphosphate biosynthesis; thiamine phosphate from 4-amino-2-methyl-5-diphosphomethylpyrimidine and 4-methyl-5-(2-phosphoethyl)-thiazole: step 1/1. Condenses 4-methyl-5-(beta-hydroxyethyl)thiazole monophosphate (THZ-P) and 2-methyl-4-amino-5-hydroxymethyl pyrimidine pyrophosphate (HMP-PP) to form thiamine monophosphate (TMP). The protein is Thiamine-phosphate synthase of Clostridium perfringens (strain 13 / Type A).